Consider the following 528-residue polypeptide: MKINLSMRELVSRLSTTLKTAIALSVLTACTANDSVSLTSNISNTSGVLLESQTKITDGALHFDGKKLNHNTFENPSKSQAYDYFFGRNISAHGDAVKPYKHFVFMTWYKGGKEERNVMLSRFNTKTGVVKTIQFPHRHTGFRGDPLVGESHNTIGLAVSPLNGTIHMVYDMHAYVDDDETGRFKGRFVDDFFRYSFSVAGAADVPDDEFTLEQFVKDTSELSQGADDYKHLTMTGNLQDKENFSALTYPKFYTSDDGELLHYMRWGGNNNGAYYFNKYDAKNQKWTRFTPFNHKDQKTHGNAYNWGLYGQMKYINGKLRVGFQQRSANNDDRFKYQNGVYYAYSDHPDGLGNWKNVDGEDMTWPLVNSDEIKIFEPGDYIDHTAPNSVHIVTGFDWTVTENDDVHFITHVRSTDTKRSDYKEVSIHAFKPANAVDFTITTDFTGADSIYTSGDSIFIIGLKNGYPFVEKAKGGSNDFEVVYQQASGVKFDHGTIHIENGKAYYYLMEKGAGNALPLHLQVIDLGVTE.

A signal peptide spans 1 to 29 (MKINLSMRELVSRLSTTLKTAIALSVLTA). Cysteine 30 is lipidated: N-palmitoyl cysteine. Cysteine 30 is lipidated: S-diacylglycerol cysteine. 151–152 (SH) is a substrate binding site. Histidine 152 functions as the Proton donor/acceptor in the catalytic mechanism. Ca(2+)-binding residues include aspartate 218, aspartate 228, and lysine 230. Substrate contacts are provided by tyrosine 309 and arginine 326. Positions 329, 332, and 334 each coordinate Ca(2+). Histidine 390 provides a ligand contact to substrate.

Belongs to the polysaccharide lyase 24 family.

It localises to the secreted. It is found in the cell membrane. Its function is as follows. Ulvan lyase involved in ulvan degradation. Ulvan is the main polysaccharide component of the Ulvales (green seaweed) cell wall. It is composed of disaccharide building blocks comprising 3-sulfated rhamnose (Rha3S) linked to D-glucuronic acid (GlcA), L-iduronic acid (IduA), or D-xylose (Xyl). Ulvan lyase catalyzes preferentially the endolytic cleavage of the glycosidic bond between Rha3S and the uronic acid GlcA, but not IduA, producing oligosaccharides that have unsaturated 4-deoxy-L-threo-hex-4-enopyranosiduronic acid (deltaUA) at the non-reducing end. The most abundant end products in the degradation of the ulvan polysaccharide were deltaUA-Rha3S disaccharides and deltaUA-Rha3S-IduA-Rha3S and deltaUA-Rha3S-Xyl-Rha3S tetrasaccharides. The polypeptide is Ulvan lyase, short isoform (Alteromonas sp. (strain LOR)).